Reading from the N-terminus, the 234-residue chain is UPF0441 protein plu3956 (234 aa).

2 disordered regions span residues 105–129 (QAGL…QQSG) and 149–234 (SAPS…SVGG). Low complexity predominate over residues 110-127 (TTTSSTSTNGEAQAQQQQ). The span at 150-175 (APSQPLFSSKSATSPANGQFVDSTGK) shows a compositional bias: polar residues. Low complexity-rich tracts occupy residues 188 to 205 (TVPK…TTIT) and 216 to 234 (QSTM…SVGG).

Belongs to the UPF0441 family.

This chain is UPF0441 protein plu3956, found in Photorhabdus laumondii subsp. laumondii (strain DSM 15139 / CIP 105565 / TT01) (Photorhabdus luminescens subsp. laumondii).